Consider the following 72-residue polypeptide: Translation initiation factor IF-1 (72 aa).

The S1-like domain maps to 1–72; the sequence is MAKEGAIEVE…TRGRIVYRYK (72 aa).

The protein belongs to the IF-1 family. In terms of assembly, component of the 30S ribosomal translation pre-initiation complex which assembles on the 30S ribosome in the order IF-2 and IF-3, IF-1 and N-formylmethionyl-tRNA(fMet); mRNA recruitment can occur at any time during PIC assembly.

The protein localises to the cytoplasm. Functionally, one of the essential components for the initiation of protein synthesis. Stabilizes the binding of IF-2 and IF-3 on the 30S subunit to which N-formylmethionyl-tRNA(fMet) subsequently binds. Helps modulate mRNA selection, yielding the 30S pre-initiation complex (PIC). Upon addition of the 50S ribosomal subunit IF-1, IF-2 and IF-3 are released leaving the mature 70S translation initiation complex. The polypeptide is Translation initiation factor IF-1 (Corynebacterium efficiens (strain DSM 44549 / YS-314 / AJ 12310 / JCM 11189 / NBRC 100395)).